Consider the following 306-residue polypeptide: MSEVTRSLLQRWGASFRRGADFDSWGQLVEAIDEYQILARHLQKEAQAQHNNSEFTEEQKKTIGKIATCLELRSAALQSTQSQEEFKLEDLKKLEPILKNILTYNKEFPFDVQPVPLRRILAPGEEENLEFEEDEEEGGAGAGSPDSFPARVPGTLLPRLPSEPGMTLLTIRIEKIGLKDAGQCIDPYITVSVKDLNGIDLTPVQDTPVASRKEDTYVHFNVDIELQKHVEKLTKGAAIFFEFKHYKPKKRFTSTKCFAFMEMDEIKPGPIVIELYKKPTDFKRKKLQLLTKKPLYLHLHQTLHKE.

Positions glutamine 27–threonine 62 form a coiled coil. The span at asparagine 128–glycine 138 shows a compositional bias: acidic residues. The segment at asparagine 128–proline 153 is disordered. Serine 144 bears the Phosphoserine mark. An axin-binding region spans residues glycine 154–asparagine 221. The region spanning leucine 157–histidine 304 is the C2 Aida-type domain.

This sequence belongs to the AIDA family. Interacts with AXIN1. In terms of tissue distribution, widely expressed in adult tissues, with highest expression in the heart and skeletal muscle.

In terms of biological role, acts as a ventralizing factor during embryogenesis. Inhibits axin-mediated JNK activation by binding axin and disrupting axin homodimerization. This in turn antagonizes a Wnt/beta-catenin-independent dorsalization pathway activated by AXIN/JNK-signaling. The polypeptide is Axin interactor, dorsalization-associated protein (AIDA) (Homo sapiens (Human)).